The sequence spans 198 residues: NADH-quinone oxidoreductase subunit B (198 aa).

Over residues 1–20 (MGLNPTQVSTSGSPQVSQPA) the composition is skewed to polar residues. Positions 1–29 (MGLNPTQVSTSGSPQVSQPATGVLDPRTG) are disordered. The [4Fe-4S] cluster site is built by Cys77, Cys78, Cys142, and Cys172.

This sequence belongs to the complex I 20 kDa subunit family. In terms of assembly, NDH-1 is composed of 14 different subunits. Subunits NuoB, C, D, E, F, and G constitute the peripheral sector of the complex. The cofactor is [4Fe-4S] cluster.

Its subcellular location is the cell inner membrane. It catalyses the reaction a quinone + NADH + 5 H(+)(in) = a quinol + NAD(+) + 4 H(+)(out). NDH-1 shuttles electrons from NADH, via FMN and iron-sulfur (Fe-S) centers, to quinones in the respiratory chain. The immediate electron acceptor for the enzyme in this species is believed to be ubiquinone. Couples the redox reaction to proton translocation (for every two electrons transferred, four hydrogen ions are translocated across the cytoplasmic membrane), and thus conserves the redox energy in a proton gradient. The polypeptide is NADH-quinone oxidoreductase subunit B (Afipia carboxidovorans (strain ATCC 49405 / DSM 1227 / KCTC 32145 / OM5) (Oligotropha carboxidovorans)).